Consider the following 254-residue polypeptide: Protein odd-skipped-related 2 (254 aa).

C2H2-type zinc fingers lie at residues 124–146, 152–174, and 180–202; these read FICK…ERTH, YSCD…KYIH, and FKCE…RATH.

This sequence belongs to the Odd C2H2-type zinc-finger protein family.

It is found in the nucleus. Functionally, may function as transcription regulator. Required for morphogenesis and function of the digestive tract. The polypeptide is Protein odd-skipped-related 2 (Caenorhabditis elegans).